A 511-amino-acid chain; its full sequence is AMP phosphorylase (511 aa).

AMP contacts are provided by residues G168, 194 to 199, and T203; that span reads SRAITS. The active-site Proton donor is D256. The AMP site is built by S262 and K286.

This sequence belongs to the thymidine/pyrimidine-nucleoside phosphorylase family. Type 2 subfamily.

It catalyses the reaction AMP + phosphate = alpha-D-ribose 1,5-bisphosphate + adenine. The enzyme catalyses CMP + phosphate = cytosine + alpha-D-ribose 1,5-bisphosphate. It carries out the reaction UMP + phosphate = alpha-D-ribose 1,5-bisphosphate + uracil. In terms of biological role, catalyzes the conversion of AMP and phosphate to adenine and ribose 1,5-bisphosphate (R15P). Exhibits phosphorylase activity toward CMP and UMP in addition to AMP. Functions in an archaeal AMP degradation pathway, together with R15P isomerase and RubisCO. In Thermofilum pendens (strain DSM 2475 / Hrk 5), this protein is AMP phosphorylase.